Consider the following 421-residue polypeptide: Aspartokinase (421 aa).

7-10 (KYGG) is a binding site for ATP. 25–30 (RIVATK) is a binding site for substrate. Position 41 (serine 41) interacts with ATP. Residues 45–49 (DTTDE), glutamate 74, 125–126 (LD), 151–154 (RGGS), and serine 154 contribute to the substrate site. ATP contacts are provided by residues 174 to 175 (SD), 180 to 185 (YTADPR), and lysine 210. ACT domains are found at residues 267-343 (VTVL…YDDQ) and 349-421 (LVGA…GTGR). Substrate is bound by residues aspartate 274, 274–279 (DKPGEA), 292–294 (NID), glutamine 298, 360–361 (VT), 374–375 (NI), and 381–382 (SE).

Belongs to the aspartokinase family. In terms of assembly, tetramer consisting of 2 isoforms Alpha (catalytic and regulation) and of a homodimer of 2 isoforms Beta (regulation). The dimerization of the beta isoforms is stabilized by the bonding of threonine.

The enzyme catalyses L-aspartate + ATP = 4-phospho-L-aspartate + ADP. It functions in the pathway amino-acid biosynthesis; L-lysine biosynthesis via DAP pathway; (S)-tetrahydrodipicolinate from L-aspartate: step 1/4. Its pathway is amino-acid biosynthesis; L-methionine biosynthesis via de novo pathway; L-homoserine from L-aspartate: step 1/3. It participates in amino-acid biosynthesis; L-threonine biosynthesis; L-threonine from L-aspartate: step 1/5. With respect to regulation, feedback inhibition by lysine and threonine, but he enzyme is moderately inhibited by lysine alone, and threonine alone has no effect. Its function is as follows. Catalyzes the phosphorylation of the beta-carboxyl group of aspartic acid with ATP to yield 4-phospho-L-aspartate, which is involved in the branched biosynthetic pathway leading to the biosynthesis of amino acids lysine, threonine, isoleucine and methionine. The polypeptide is Aspartokinase (lysC) (Corynebacterium glutamicum (strain ATCC 13032 / DSM 20300 / JCM 1318 / BCRC 11384 / CCUG 27702 / LMG 3730 / NBRC 12168 / NCIMB 10025 / NRRL B-2784 / 534)).